The sequence spans 217 residues: Urease accessory protein UreF (217 aa).

The protein belongs to the UreF family. UreD, UreF and UreG form a complex that acts as a GTP-hydrolysis-dependent molecular chaperone, activating the urease apoprotein by helping to assemble the nickel containing metallocenter of UreC. The UreE protein probably delivers the nickel.

Its subcellular location is the cytoplasm. Its function is as follows. Required for maturation of urease via the functional incorporation of the urease nickel metallocenter. The chain is Urease accessory protein UreF from Ruegeria pomeroyi (strain ATCC 700808 / DSM 15171 / DSS-3) (Silicibacter pomeroyi).